A 471-amino-acid polypeptide reads, in one-letter code: MEKQENVGHIVQIFGPVIDVQFPNEHMPAILSALEVKINDESIIFEVAQHLGEGIVRAIAMSMTYNLSKGLEVYDTGSQISVPVGKQVLSRMFNVLGQPIDGGKPLDSFIKNPIHAKAPTYLEQKATSEILVTGIKVIDLLIPFIKGGKIGLFGGAGVGKTVLVQELINNIASKHGGLSVFAGVGERSREGNDLYFEMKKAGVLDKTALVFGQMNEPPGARMRVALSALTMAEYFRDYENQDVLLFIDNIFRFTQAGSEVSTLLGRIPSTVGYQPTLSTEMGQLQERITSTIRGSITSVQAVYVPADDITDPAPATTFSHLDAKTVLDRGIAALGIYPAVDPLASSSRALEPNIVGKKHYLVAKKVVQILQRFKELQDIIAILGVDELSESDKQVVARARRIRNFLSQPFFVAQKFSGIQGQFIKIQDTVNNFDELLSGKYDNIPEEAFLYVGTIDQALEKAKKMGWSEKN.

G154–T161 lines the ATP pocket.

The protein belongs to the ATPase alpha/beta chains family. F-type ATPases have 2 components, CF(1) - the catalytic core - and CF(0) - the membrane proton channel. CF(1) has five subunits: alpha(3), beta(3), gamma(1), delta(1), epsilon(1). CF(0) has three main subunits: a(1), b(2) and c(9-12). The alpha and beta chains form an alternating ring which encloses part of the gamma chain. CF(1) is attached to CF(0) by a central stalk formed by the gamma and epsilon chains, while a peripheral stalk is formed by the delta and b chains.

It localises to the cell membrane. It carries out the reaction ATP + H2O + 4 H(+)(in) = ADP + phosphate + 5 H(+)(out). Produces ATP from ADP in the presence of a proton gradient across the membrane. The catalytic sites are hosted primarily by the beta subunits. The sequence is that of ATP synthase subunit beta from Mesomycoplasma hyopneumoniae (strain 7448) (Mycoplasma hyopneumoniae).